We begin with the raw amino-acid sequence, 169 residues long: Protein-export protein SecB (169 aa).

This sequence belongs to the SecB family. In terms of assembly, homotetramer, a dimer of dimers. One homotetramer interacts with 1 SecA dimer.

The protein localises to the cytoplasm. In terms of biological role, one of the proteins required for the normal export of preproteins out of the cell cytoplasm. It is a molecular chaperone that binds to a subset of precursor proteins, maintaining them in a translocation-competent state. It also specifically binds to its receptor SecA. The chain is Protein-export protein SecB from Alteromonas mediterranea (strain DSM 17117 / CIP 110805 / LMG 28347 / Deep ecotype).